The primary structure comprises 188 residues: MNGDDTFARRPTVGAQIPEKIQKAFDDIAKYFSKEEWEKMKVSEKIVYVYMKRKYEAMTKLGFKAILPSFMRNKRVTDFQGNDFDNDPNRGNQVQRPQMTFGRLQGIFPKIMPKKPAEEGNVSKEVPEASGPQNDGKQLCPPGKPTTSEKINMISGPKRGEHAWTHRLRERKQLVIYEEISDPEEDDE.

The region spanning 20–83 (KIQKAFDDIA…KRVTDFQGND (64 aa)) is the KRAB-related domain. The tract at residues 113–162 (PKKPAEEGNVSKEVPEASGPQNDGKQLCPPGKPTTSEKINMISGPKRGEH) is disordered. Residues 115–127 (KPAEEGNVSKEVP) show a composition bias toward basic and acidic residues. Ser-123 is modified (phosphoserine).

The protein belongs to the SSX family. Interacts with SSX2IP.

In terms of biological role, could act as a modulator of transcription. The protein is Protein SSX3 (SSX3) of Homo sapiens (Human).